Reading from the N-terminus, the 462-residue chain is Fumarate hydratase class II (462 aa).

Substrate contacts are provided by residues 97 to 99 (SGT), 127 to 130 (HPND), 137 to 139 (SSN), and T185. H186 serves as the catalytic Proton donor/acceptor. S316 is an active-site residue. Substrate contacts are provided by residues S317 and 322–324 (KVN).

Belongs to the class-II fumarase/aspartase family. Fumarase subfamily. Homotetramer.

The protein resides in the cytoplasm. It catalyses the reaction (S)-malate = fumarate + H2O. It participates in carbohydrate metabolism; tricarboxylic acid cycle; (S)-malate from fumarate: step 1/1. In terms of biological role, involved in the TCA cycle. Catalyzes the stereospecific interconversion of fumarate to L-malate. The protein is Fumarate hydratase class II of Halalkalibacterium halodurans (strain ATCC BAA-125 / DSM 18197 / FERM 7344 / JCM 9153 / C-125) (Bacillus halodurans).